We begin with the raw amino-acid sequence, 218 residues long: MFINHLHNTDIILASGSPRRKQLLEDAGINFRIHTKNVEENYPVYLQRSEIPLYLSKIKAHAVKADFPDSLIIAADTIVVQRRDVFNKPGSAEEAKDMLRKLSNNMHEVITGVTICYGEKERSFYDITEVFFKPLSETYINYYIENHKPFDKAGAYGIQEWLGMVGIKKIQGDFYNVMGLPVSKLIDELEKMFNPELELNQINSNRPEEPNKYLYFGI.

Residue D76 is the Proton acceptor of the active site.

Belongs to the Maf family. YhdE subfamily. The cofactor is a divalent metal cation.

Its subcellular location is the cytoplasm. The catalysed reaction is dTTP + H2O = dTMP + diphosphate + H(+). It carries out the reaction UTP + H2O = UMP + diphosphate + H(+). Its function is as follows. Nucleoside triphosphate pyrophosphatase that hydrolyzes dTTP and UTP. May have a dual role in cell division arrest and in preventing the incorporation of modified nucleotides into cellular nucleic acids. The polypeptide is dTTP/UTP pyrophosphatase (Cytophaga hutchinsonii (strain ATCC 33406 / DSM 1761 / CIP 103989 / NBRC 15051 / NCIMB 9469 / D465)).